A 236-amino-acid chain; its full sequence is Purine nucleoside phosphorylase DeoD-type (236 aa).

An a purine D-ribonucleoside-binding site is contributed by His5. Residues Gly21, Arg25, Arg44, and 88 to 91 contribute to the phosphate site; that span reads RVGT. A purine D-ribonucleoside-binding positions include 180–182 and 204–205; these read EME and SD. The active-site Proton donor is Asp205.

It belongs to the PNP/UDP phosphorylase family. Homohexamer; trimer of homodimers.

It carries out the reaction a purine D-ribonucleoside + phosphate = a purine nucleobase + alpha-D-ribose 1-phosphate. The catalysed reaction is a purine 2'-deoxy-D-ribonucleoside + phosphate = a purine nucleobase + 2-deoxy-alpha-D-ribose 1-phosphate. Catalyzes the reversible phosphorolytic breakdown of the N-glycosidic bond in the beta-(deoxy)ribonucleoside molecules, with the formation of the corresponding free purine bases and pentose-1-phosphate. The sequence is that of Purine nucleoside phosphorylase DeoD-type from Shewanella loihica (strain ATCC BAA-1088 / PV-4).